Consider the following 681-residue polypeptide: Potassium-transporting ATPase ATP-binding subunit 1 (681 aa).

Helical transmembrane passes span 30–50 (LLVYVGAILATSLYFLGFFGI), 59–79 (LAIALILWFTVLFANFAEAIA), 216–236 (ILLVTLSIIFLAVSATLLPFT), and 255–275 (IALLVCLAPTTIGALLSSIGI). D306 (4-aspartylphosphate intermediate) is an active-site residue. Residues D343, E347, 376-383 (FTATTRMS), and K394 each bind ATP. Residues D517 and D521 each contribute to the Mg(2+) site. 3 helical membrane passes run 587-607 (FAIIPVLFYGIFPQLEALNLM), 615-635 (AILSAIIYNAVIIIFLIPLSL), and 661-681 (LIAPFIAIKLIDMLLTVLGIV).

The protein belongs to the cation transport ATPase (P-type) (TC 3.A.3) family. Type IA subfamily. The system is composed of three essential subunits: KdpA, KdpB and KdpC.

Its subcellular location is the cell membrane. It catalyses the reaction K(+)(out) + ATP + H2O = K(+)(in) + ADP + phosphate + H(+). Part of the high-affinity ATP-driven potassium transport (or Kdp) system, which catalyzes the hydrolysis of ATP coupled with the electrogenic transport of potassium into the cytoplasm. This subunit is responsible for energy coupling to the transport system and for the release of the potassium ions to the cytoplasm. This is Potassium-transporting ATPase ATP-binding subunit 1 from Listeria innocua serovar 6a (strain ATCC BAA-680 / CLIP 11262).